A 469-amino-acid polypeptide reads, in one-letter code: Probable NADPH:adrenodoxin oxidoreductase, mitochondrial (469 aa).

The N-terminal 38 residues, 1–38 (MLSRFIKRTYSTQTSSPVVGIIGSGPAAFYTAHRLLRN), are a transit peptide targeting the mitochondrion. FAD is bound by residues A27, E48, L56, and V92. Residues 164–167 (HGNV), 208–209 (RR), and E220 contribute to the NADP(+) site. FAD is bound by residues W375 and 382–384 (GVI). Residue G382 coordinates NADP(+).

Belongs to the ferredoxin--NADP reductase type 1 family. It depends on FAD as a cofactor.

The protein resides in the mitochondrion inner membrane. The enzyme catalyses 2 reduced [adrenodoxin] + NADP(+) + H(+) = 2 oxidized [adrenodoxin] + NADPH. In terms of biological role, adrenodoxin reductase transfers electrons from NADPH to adrenodoxin, which is involved in heme A biosynthesis and in iron-sulfur cluster assembly. Involved in the electron transfer to heme A synthase etp1(cd), a heme protein that catalyzes the conversion of heme O to heme A. Required for the de novo synthesis of Fe-S clusters on iron sulfur cluster assembly protein isu1. Involved in electron delivery for Fe-S cluster synthesis. Essential for coenzyme Q biosynthesis. May be involved in the electron transfer required for the hydroxylation reaction performed by coq6. May play a role in cellular and mitochondrial iron homeostasis. This Schizosaccharomyces pombe (strain 972 / ATCC 24843) (Fission yeast) protein is Probable NADPH:adrenodoxin oxidoreductase, mitochondrial (arh1).